Reading from the N-terminus, the 334-residue chain is G-protein coupled receptor 12 (334 aa).

Residues methionine 1–aspartate 48 are Extracellular-facing. 2 N-linked (GlcNAc...) asparagine glycosylation sites follow: asparagine 8 and asparagine 24. A helical transmembrane segment spans residues isoleucine 49–isoleucine 69. Residues phenylalanine 70–proline 78 are Cytoplasmic-facing. The chain crosses the membrane as a helical span at residues methionine 79 to isoleucine 99. Residues asparagine 100–lysine 113 are Extracellular-facing. The chain crosses the membrane as a helical span at residues leucine 114 to isoleucine 134. Residues threonine 135–tyrosine 158 are Cytoplasmic-facing. A helical membrane pass occupies residues valine 159–tryptophan 179. Topologically, residues asparagine 180–alanine 199 are extracellular. The helical transmembrane segment at alanine 200–isoleucine 220 threads the bilayer. At cysteine 221–threonine 252 the chain is on the cytoplasmic side. Residues leucine 253–isoleucine 273 form a helical membrane-spanning segment. Over alanine 274–tyrosine 282 the chain is Extracellular. A helical membrane pass occupies residues threonine 283–phenylalanine 303. The Cytoplasmic portion of the chain corresponds to arginine 304–valine 334. Cysteine 317 is lipidated: S-palmitoyl cysteine. 2 positions are modified to phosphoserine: serine 330 and serine 332.

The protein belongs to the G-protein coupled receptor 1 family. Expressed in the brain, pituitary gland and testis.

The protein resides in the cell membrane. Functionally, receptor with constitutive G(s) signaling activity that activates cyclic AMP. Promotes neurite outgrowth and blocks myelin inhibition in neurons. This chain is G-protein coupled receptor 12 (Gpr12), found in Rattus norvegicus (Rat).